The primary structure comprises 76 residues: Small ribosomal subunit protein bS18 (76 aa).

It belongs to the bacterial ribosomal protein bS18 family. As to quaternary structure, part of the 30S ribosomal subunit. Forms a tight heterodimer with protein bS6.

Its function is as follows. Binds as a heterodimer with protein bS6 to the central domain of the 16S rRNA, where it helps stabilize the platform of the 30S subunit. The polypeptide is Small ribosomal subunit protein bS18 (Neisseria gonorrhoeae (strain ATCC 700825 / FA 1090)).